The following is a 191-amino-acid chain: UPF0312 protein PA0423 (191 aa).

Residues 1–23 (MLKKTLAALALGSALFTAGQAMA) form the signal peptide.

Belongs to the UPF0312 family. Type 1 subfamily.

It localises to the periplasm. This chain is UPF0312 protein PA0423, found in Pseudomonas aeruginosa (strain ATCC 15692 / DSM 22644 / CIP 104116 / JCM 14847 / LMG 12228 / 1C / PRS 101 / PAO1).